Consider the following 440-residue polypeptide: Argininosuccinate lyase (440 aa).

This sequence belongs to the lyase 1 family. Argininosuccinate lyase subfamily.

The protein localises to the cytoplasm. The catalysed reaction is 2-(N(omega)-L-arginino)succinate = fumarate + L-arginine. It functions in the pathway amino-acid biosynthesis; L-arginine biosynthesis; L-arginine from L-ornithine and carbamoyl phosphate: step 3/3. The sequence is that of Argininosuccinate lyase from Clostridium botulinum (strain Kyoto / Type A2).